A 417-amino-acid chain; its full sequence is Calreticulin (417 aa).

The N-terminal stretch at 1–17 (MLLPVPLLLGLVGLAAA) is a signal peptide. The tract at residues 18 to 197 (EPTIYFKEQF…NSQVESGSLE (180 aa)) is N-domain. Ca(2+)-binding residues include glutamine 26, lysine 62, and lysine 64. The residue at position 64 (lysine 64) is an N6-(2-hydroxyisobutyryl)lysine. Residues tyrosine 109, lysine 111, tyrosine 128, and aspartate 135 each contribute to the an alpha-D-glucoside site. A disulfide bond links cysteine 137 and cysteine 163. The residue at position 159 (lysine 159) is an N6-acetyllysine. A 1-1 repeat occupies 191–202 (VESGSLEDDWDF). The 4 X approximate repeats stretch occupies residues 191–255 (VESGSLEDDW…DAKKPEDWDE (65 aa)). The interval 193–277 (SGSLEDDWDF…NPEYKGEWKP (85 aa)) is disordered. Residues 198 to 308 (DDWDFLPPKK…YSPDSNIYAY (111 aa)) form a P-domain region. Residues 207–251 (KIKDPDAVKPEDWDERAKIDDPTDSKPEDWDKPEHIPDPDAKKPE) are compositionally biased toward basic and acidic residues. Lysine 209 is subject to N6-acetyllysine. A run of 6 repeats spans residues 210–221 (DPDAVKPEDWDE), 227–238 (DPTDSKPEDWDK), 244–255 (DPDAKKPEDWDE), 259–269 (GEWEPPVIQNP), 273–283 (GEWKPRQIDNP), and 287–297 (GTWIHPEIDNP). The interval 237 to 270 (DKPEHIPDPDAKKPEDWDEEMDGEWEPPVIQNPE) is interaction with PPIB. A compositionally biased stretch (acidic residues) spans 252–261 (DWDEEMDGEW). The tract at residues 259–297 (GEWEPPVIQNPEYKGEWKPRQIDNPDYKGTWIHPEIDNP) is 3 X approximate repeats. Residues 309–417 (ENFAVLGLDL…AAAGQAKDEL (109 aa)) form a C-domain region. Aspartate 317 contributes to the an alpha-D-glucoside binding site. Aspartate 328 lines the Ca(2+) pocket. The segment at 350 to 417 (TKAAEKQMKD…AAAGQAKDEL (68 aa)) is disordered. Basic and acidic residues predominate over residues 352–379 (AAEKQMKDKQDEEQRLKEEEEEKKRKEE). Residues 380 to 408 (EEVDKEDEEDKDEDEEEEDEKEEEEEEDA) show a composition bias toward acidic residues. A Prevents secretion from ER motif is present at residues 414–417 (KDEL).

This sequence belongs to the calreticulin family. As to quaternary structure, monomer. Component of an EIF2 complex at least composed of CELF1/CUGBP1, CALR, CALR3, EIF2S1, EIF2S2, HSP90B1 and HSPA5. Interacts with PDIA3/ERp57 and SPACA9. Interacts with TRIM21. Interacts with NR3C1. Interacts with PPIB. Interacts (via P-domain) with PDIA5. Interacts with CLCC1. In terms of tissue distribution, in blastocyst expressed in all blastomeres (at protein level). In embryos, expressed in spleen, kidney, liver, fat, muscle, ovary, granulosa cells and cumulus cells.

It localises to the endoplasmic reticulum lumen. The protein resides in the cytoplasm. The protein localises to the cytosol. Its subcellular location is the secreted. It is found in the extracellular space. It localises to the extracellular matrix. The protein resides in the cell surface. The protein localises to the sarcoplasmic reticulum lumen. Its subcellular location is the cytoplasmic vesicle. It is found in the secretory vesicle. It localises to the cortical granule. The protein resides in the cytolytic granule. Calcium-binding chaperone that promotes folding, oligomeric assembly and quality control in the endoplasmic reticulum (ER) via the calreticulin/calnexin cycle. This lectin interacts transiently with almost all of the monoglucosylated glycoproteins that are synthesized in the ER. Interacts with the DNA-binding domain of NR3C1 and mediates its nuclear export. Involved in maternal gene expression regulation. May participate in oocyte maturation via the regulation of calcium homeostasis. Present in the cortical granules of non-activated oocytes, is exocytosed during the cortical reaction in response to oocyte activation and might participate in the block to polyspermy. This is Calreticulin (CALR) from Sus scrofa (Pig).